The sequence spans 259 residues: MNNLSLANEKTKIQVRGLEFFYNNQKSLKSIDMTIPEKRITAIIGPSGCGKSTLLRVFNRIYAMYPKQEARGEVLLNGENILAPGYSMNRLRSHVGMVFQKPVPFPMSIFDNISYAIKHHEKLSRREMEDRVEQALRGAALWDEVKDKLKQSATGLSGGQQQRLCIARTIALRPQVLLLDEPTSALDPISTGRIEQLITELKEQFTVIIVTHNMQQAARCSDYTAFMFMGELIEHGDTDTIFTKPSKTQTEDYITGRFG.

Residues 13–254 (IQVRGLEFFY…PSKTQTEDYI (242 aa)) form the ABC transporter domain. Position 45 to 52 (45 to 52 (GPSGCGKS)) interacts with ATP.

This sequence belongs to the ABC transporter superfamily. Phosphate importer (TC 3.A.1.7) family. In terms of assembly, the complex is composed of two ATP-binding proteins (PstB), two transmembrane proteins (PstC and PstA) and a solute-binding protein (PstS).

The protein resides in the cell inner membrane. It catalyses the reaction phosphate(out) + ATP + H2O = ADP + 2 phosphate(in) + H(+). Functionally, part of the ABC transporter complex PstSACB involved in phosphate import. Responsible for energy coupling to the transport system. This is Phosphate import ATP-binding protein PstB 1 from Pseudomonas savastanoi pv. phaseolicola (strain 1448A / Race 6) (Pseudomonas syringae pv. phaseolicola (strain 1448A / Race 6)).